Consider the following 253-residue polypeptide: NAD-dependent protein deacetylase (253 aa).

The Deacetylase sirtuin-type domain occupies 3 to 253 (APSLSSGVEQ…GETLGPFVGN (251 aa)). Residues Ala-29, Thr-33, Phe-40, Arg-41, Gln-106, Ile-108, Asp-109, and His-126 each coordinate NAD(+). Phe-40 serves as a coordination point for nicotinamide. Nicotinamide is bound by residues Ile-108 and Asp-109. The Proton acceptor role is filled by His-126. Cys-134, Cys-137, Cys-159, and Cys-162 together coordinate Zn(2+). NAD(+) contacts are provided by Ser-200, Ser-201, Asn-225, Asp-242, and Ile-243.

The protein belongs to the sirtuin family. Class U subfamily. It depends on Zn(2+) as a cofactor.

The protein resides in the cytoplasm. It carries out the reaction N(6)-acetyl-L-lysyl-[protein] + NAD(+) + H2O = 2''-O-acetyl-ADP-D-ribose + nicotinamide + L-lysyl-[protein]. Its function is as follows. NAD-dependent protein deacetylase which modulates the activities of several enzymes which are inactive in their acetylated form. The sequence is that of NAD-dependent protein deacetylase from Rhodopseudomonas palustris (strain ATCC BAA-98 / CGA009).